The following is a 558-amino-acid chain: Potassium-transporting ATPase potassium-binding subunit (558 aa).

A run of 12 helical transmembrane segments spans residues 1–21, 66–86, 127–147, 166–186, 245–265, 281–301, 327–347, 354–374, 377–397, 416–436, 482–502, and 531–551; these read MEII…SGYL, FNGF…WLFL, MIVM…VCIA, IVRF…ILLM, IWSN…MLFL, ALIL…LTMW, FGAG…TGSV, LTPI…VFGG, VGLM…SLMV, IVLV…LAFM, ISTG…QLMI, and IVFI…LGPI.

It belongs to the KdpA family. The system is composed of three essential subunits: KdpA, KdpB and KdpC.

It localises to the cell membrane. Functionally, part of the high-affinity ATP-driven potassium transport (or Kdp) system, which catalyzes the hydrolysis of ATP coupled with the electrogenic transport of potassium into the cytoplasm. This subunit binds the extracellular potassium ions and delivers the ions to the membrane domain of KdpB through an intramembrane tunnel. The sequence is that of Potassium-transporting ATPase potassium-binding subunit from Staphylococcus aureus (strain USA300).